The following is a 335-amino-acid chain: MEDSGKTFSSEEEEANYWKDLAMTYKQRAENTQEELREFQEGSREYEAELETQLQQIETRNRDLLSENNRLRMELETIKEKFEVQHSEGYRQISALEDDLAQTKAIKDQLQKYIRELEQANDDLERAKRATIMSLEDFEQRLNQAIERNAFLESELDEKENLLESVQRLKDEARDLRQELAVQQKQEKPRTPMPSSVEAERTDTAVQATGSVPSTPIAHRGPSSSLNTPGSFRRGLDDSTGGTPLTPAARISALNIVGDLLRKVGALESKLASCRNLVYDQSPNRTGGPASGRSSKNRDGGERRPSSTSVPLGDKGLDTSCRWLSKSTTRSSSSC.

Positions 1-93 are self-association; the sequence is MEDSGKTFSS…VQHSEGYRQI (93 aa). Residues 18 to 188 are a coiled coil; the sequence is WKDLAMTYKQ…ELAVQQKQEK (171 aa). The tract at residues 88–156 is interaction with PAFAH1B1; it reads EGYRQISALE…ERNAFLESEL (69 aa). Positions 167-290 are interaction with CENPF; sequence QRLKDEARDL…QSPNRTGGPA (124 aa). The interval 181-246 is disordered; the sequence is AVQQKQEKPR…DDSTGGTPLT (66 aa). Over residues 204–214 the composition is skewed to polar residues; the sequence is TAVQATGSVPS. Position 211 is a phosphoserine (Ser211). Thr215 and Thr228 each carry phosphothreonine. Phosphoserine is present on residues Ser231 and Ser239. Phosphothreonine is present on residues Thr243 and Thr246. A lipid anchor (S-palmitoyl cysteine; by ZDHHC2, ZDHHC3 and ZDHHC7) is attached at Cys274. The tract at residues 279 to 335 is disordered; sequence YDQSPNRTGGPASGRSSKNRDGGERRPSSTSVPLGDKGLDTSCRWLSKSTTRSSSSC. Ser282 bears the Phosphoserine mark. The segment covering 296 to 305 has biased composition (basic and acidic residues); the sequence is KNRDGGERRP. Ser309 carries the post-translational modification Phosphoserine. Low complexity predominate over residues 325 to 335; sequence SKSTTRSSSSC.

The protein belongs to the nudE family. Homodimer. Interacts with CNTRL, LIS1, dynein, SLMAP and TCP1. Interacts with CENPF, dynactin, tubulin gamma, PAFAH1B1, PCM1 and PCNT. Interacts with ZNF365. Interacts with GTP-bound RAB9A and RAB9B; the interaction leads to RAB9-dynein motor tethering. Interacts (via C-terminus) with MCRS1 (via C-terminus); phosphorylation of NDE1 inhibits the interaction. Phosphorylated in mitosis. Phosphorylated in vitro by CDC2. Phosphorylation at Thr-246 is essential for the G2/M transition. Expressed in the neuroepithelium throughout the developing brain, including the cerebral cortex and cerebellum.

It is found in the cytoplasm. Its subcellular location is the cytoskeleton. It localises to the microtubule organizing center. The protein localises to the centrosome. The protein resides in the chromosome. It is found in the centromere. Its subcellular location is the kinetochore. It localises to the spindle. The protein localises to the cleavage furrow. The protein resides in the cytoplasmic vesicle membrane. Its function is as follows. Required for centrosome duplication and formation and function of the mitotic spindle. Essential for the development of the cerebral cortex. May regulate the production of neurons by controlling the orientation of the mitotic spindle during division of cortical neuronal progenitors of the proliferative ventricular zone of the brain. Orientation of the division plane perpendicular to the layers of the cortex gives rise to two proliferative neuronal progenitors whereas parallel orientation of the division plane yields one proliferative neuronal progenitor and a postmitotic neuron. A premature shift towards a neuronal fate within the progenitor population may result in an overall reduction in the final number of neurons and an increase in the number of neurons in the deeper layers of the cortex. Acts as a RAB9A/B effector that tethers RAB9-associated late endosomes to the dynein motor for their retrograde transport to the trans-Golgi network. The polypeptide is Nuclear distribution protein nudE homolog 1 (Homo sapiens (Human)).